Consider the following 441-residue polypeptide: BTB/POZ domain-containing protein At3g05675 (441 aa).

Residues 20 to 98 form the BTB domain; it reads SDIVVRLRNE…LYVVSDDVHE (79 aa).

Its pathway is protein modification; protein ubiquitination. Functionally, may act as a substrate-specific adapter of an E3 ubiquitin-protein ligase complex (CUL3-RBX1-BTB) which mediates the ubiquitination and subsequent proteasomal degradation of target proteins. The polypeptide is BTB/POZ domain-containing protein At3g05675 (Arabidopsis thaliana (Mouse-ear cress)).